The chain runs to 321 residues: Acetyl-coenzyme A carboxylase carboxyl transferase subunit alpha (321 aa).

A CoA carboxyltransferase C-terminal domain is found at 32-293 (DISEEIARLQ…KRVLQDQLKE (262 aa)).

The protein belongs to the AccA family. As to quaternary structure, acetyl-CoA carboxylase is a heterohexamer composed of biotin carboxyl carrier protein (AccB), biotin carboxylase (AccC) and two subunits each of ACCase subunit alpha (AccA) and ACCase subunit beta (AccD).

The protein resides in the cytoplasm. The enzyme catalyses N(6)-carboxybiotinyl-L-lysyl-[protein] + acetyl-CoA = N(6)-biotinyl-L-lysyl-[protein] + malonyl-CoA. It functions in the pathway lipid metabolism; malonyl-CoA biosynthesis; malonyl-CoA from acetyl-CoA: step 1/1. Component of the acetyl coenzyme A carboxylase (ACC) complex. First, biotin carboxylase catalyzes the carboxylation of biotin on its carrier protein (BCCP) and then the CO(2) group is transferred by the carboxyltransferase to acetyl-CoA to form malonyl-CoA. The polypeptide is Acetyl-coenzyme A carboxylase carboxyl transferase subunit alpha (Chromobacterium violaceum (strain ATCC 12472 / DSM 30191 / JCM 1249 / CCUG 213 / NBRC 12614 / NCIMB 9131 / NCTC 9757 / MK)).